The sequence spans 301 residues: D-alanine--D-alanine ligase (301 aa).

Residues 99–294 (KSVLEANGIR…FSELIDMIIQ (196 aa)) form the ATP-grasp domain. 126–181 (INELGYPVVVKPTHGGSSVATFIVKEEKEIENCVSEAFKWDSEVMIEKFIKGDEIT) is an ATP binding site. Mg(2+) contacts are provided by D248, E261, and N263.

This sequence belongs to the D-alanine--D-alanine ligase family. Mg(2+) is required as a cofactor. Mn(2+) serves as cofactor.

It is found in the cytoplasm. It catalyses the reaction 2 D-alanine + ATP = D-alanyl-D-alanine + ADP + phosphate + H(+). It functions in the pathway cell wall biogenesis; peptidoglycan biosynthesis. In terms of biological role, cell wall formation. The protein is D-alanine--D-alanine ligase of Clostridium beijerinckii (strain ATCC 51743 / NCIMB 8052) (Clostridium acetobutylicum).